Here is a 210-residue protein sequence, read N- to C-terminus: Secreted effector protein SteA (210 aa).

It localises to the secreted. It is found in the host cytoplasm. Its function is as follows. Effector proteins function to alter host cell physiology and promote bacterial survival in host tissues. Could be required for passage of bacteria from the peritoneal cavity into the spleen, for survival and replication within host cells, or for avoiding host immune response. This is Secreted effector protein SteA (steA) from Salmonella typhimurium (strain 14028s / SGSC 2262).